The primary structure comprises 252 residues: Trans-aconitate 2-methyltransferase (252 aa).

It belongs to the methyltransferase superfamily. Tam family.

It localises to the cytoplasm. The catalysed reaction is trans-aconitate + S-adenosyl-L-methionine = (E)-3-(methoxycarbonyl)pent-2-enedioate + S-adenosyl-L-homocysteine. In terms of biological role, catalyzes the S-adenosylmethionine monomethyl esterification of trans-aconitate. This is Trans-aconitate 2-methyltransferase from Escherichia coli (strain UTI89 / UPEC).